The primary structure comprises 226 residues: Cytidylate kinase (226 aa).

12 to 20 (GPSGAGKGT) provides a ligand contact to ATP.

It belongs to the cytidylate kinase family. Type 1 subfamily.

It is found in the cytoplasm. It catalyses the reaction CMP + ATP = CDP + ADP. The enzyme catalyses dCMP + ATP = dCDP + ADP. The chain is Cytidylate kinase from Colwellia psychrerythraea (strain 34H / ATCC BAA-681) (Vibrio psychroerythus).